Here is a 299-residue protein sequence, read N- to C-terminus: Peroxisomal biogenesis factor 19 (299 aa).

Alanine 2 is subject to N-acetylalanine. The tract at residues 2 to 56 (AAAEGGCGAGVEADRELEELLESALDDFDKAKPSPAPSPTISAPDASGPQKRSPG) is docking to the peroxisome membrane and binding to PEX3. The interval 2–91 (AAAEGGCGAG…QATAEFEKAM (90 aa)) is necessary for PEX19 function on peroxisome biogenesis. The interval 25 to 63 (ALDDFDKAKPSPAPSPTISAPDASGPQKRSPGDTAKDAL) is disordered. Phosphoserine is present on residues serine 35, serine 39, serine 54, and serine 66. Residue threonine 236 is modified to Phosphothreonine. Position 296 is a cysteine methyl ester (cysteine 296). Residue cysteine 296 is the site of S-farnesyl cysteine attachment. Residues 297–299 (LIM) constitute a propeptide, removed in mature form.

Belongs to the peroxin-19 family. Interacts with a broad range of peroxisomal membrane proteins, including PEX3, PEX10, PEX11A, PEX11B, PEX12, PEX13, PEX14 and PEX16, PXMP2/PMP22, PXMP4/PMP24, SLC25A17/PMP34, ABCD1/ALDP, ABCD2/ALDRP, and ABCD3/PMP70. Also interacts with the tumor suppressor CDKN2A/p19ARF.

It is found in the cytoplasm. The protein resides in the peroxisome membrane. In terms of biological role, necessary for early peroxisomal biogenesis. Acts both as a cytosolic chaperone and as an import receptor for peroxisomal membrane proteins (PMPs). Binds and stabilizes newly synthesized PMPs in the cytoplasm by interacting with their hydrophobic membrane-spanning domains, and targets them to the peroxisome membrane by binding to the integral membrane protein PEX3. Excludes CDKN2A from the nucleus and prevents its interaction with MDM2, which results in active degradation of TP53. The protein is Peroxisomal biogenesis factor 19 (Pex19) of Rattus norvegicus (Rat).